The sequence spans 225 residues: Insulin-induced gene 2 protein (225 aa).

Over 1–28 (MAEGETESPGPKKCGPYISSVTSQSVNL) the chain is Cytoplasmic. Residues 29–51 (MIRGVVLFFIGVFLALVLNLLQI) traverse the membrane as a helical segment. The Lumenal portion of the chain corresponds to 52–70 (QRNVTLFPPDVIASIFSSA). Residues 71 to 88 (WWVPPCCGTASAVIGLLY) traverse the membrane as a helical segment. Residues 89–103 (PCIDRHLGEPHKFKR) lie on the Cytoplasmic side of the membrane. A helical membrane pass occupies residues 104–126 (EWSSVMRCVAVFVGINHASAKVD). Residues 127-129 (FDN) lie on the Lumenal side of the membrane. A helical membrane pass occupies residues 130 to 148 (NIQLSLTLAALSIGLWWTF). Over 149–153 (DRSRS) the chain is Cytoplasmic. Residue Ser-151 is modified to Phosphoserine. The chain crosses the membrane as a helical span at residues 154–175 (GFGLGVGIAFLATLVTQLLVYN). Topologically, residues 176 to 189 (GVYQYTSPDFLYVR) are lumenal. A helical transmembrane segment spans residues 190–207 (SWLPCIFFAGGITMGNIG). Topologically, residues 208–225 (RQLAMYECKVIAEKSHQE) are cytoplasmic. At Cys-215 the chain carries Cysteine sulfenic acid (-SOH); alternate. Cys-215 participates in a covalent cross-link: Glycyl cysteine thioester (Cys-Gly) (interchain with G-Cter in ubiquitin); alternate. Positions 219–225 (AEKSHQE) match the KxHxx motif.

Belongs to the INSIG family. In terms of assembly, interacts with SCAP; interaction is direct and only takes place in the presence of sterols; it prevents interaction between SCAP and the coat protein complex II (COPII). Associates with the SCAP-SREBP complex (composed of SCAP and SREBF1/SREBP1 or SREBF2/SREBP2); association is mediated via its interaction with SCAP and only takes place in the presence of sterols. Interacts with RNF139. Interacts with RNF145. Phosphorylation at Ser-151 by PCK1 reduces binding to oxysterol, disrupting the interaction between INSIG2 and SCAP, thereby promoting nuclear translocation of SREBP proteins (SREBF1/SREBP1 or SREBF2/SREBP2) and subsequent transcription of downstream lipogenesis-related genes. In terms of processing, polyubiquitinated by AMFR/gp78 at Cys-215 in some tissues such as adipose tissues, undifferentiated myoblasts and liver, leading to its degradation. In differentiated myotubes, Cys-215 oxidation prevents ubiquitination at the same site, resulting in protein stabilization. Post-translationally, oxidized at Cys-215 in differentiated myotubes, preventing ubiquitination at the same site, and resulting in protein stabilization.

The protein localises to the endoplasmic reticulum membrane. In terms of biological role, oxysterol-binding protein that mediates feedback control of cholesterol synthesis by controlling both endoplasmic reticulum to Golgi transport of SCAP and degradation of HMGCR. Acts as a negative regulator of cholesterol biosynthesis by mediating the retention of the SCAP-SREBP complex in the endoplasmic reticulum, thereby blocking the processing of sterol regulatory element-binding proteins (SREBPs) SREBF1/SREBP1 and SREBF2/SREBP2. Binds oxysterol, including 22-hydroxycholesterol, 24-hydroxycholesterol, 25-hydroxycholesterol and 27-hydroxycholesterol, regulating interaction with SCAP and retention of the SCAP-SREBP complex in the endoplasmic reticulum. In presence of oxysterol, interacts with SCAP, retaining the SCAP-SREBP complex in the endoplasmic reticulum, thereby preventing SCAP from escorting SREBF1/SREBP1 and SREBF2/SREBP2 to the Golgi. Sterol deprivation or phosphorylation by PCK1 reduce oxysterol-binding, disrupting the interaction between INSIG2 and SCAP, thereby promoting Golgi transport of the SCAP-SREBP complex, followed by processing and nuclear translocation of SREBF1/SREBP1 and SREBF2/SREBP2. Also regulates cholesterol synthesis by regulating degradation of HMGCR: initiates the sterol-mediated ubiquitin-mediated endoplasmic reticulum-associated degradation (ERAD) of HMGCR via recruitment of the reductase to the ubiquitin ligase RNF139. The chain is Insulin-induced gene 2 protein from Papio anubis (Olive baboon).